The sequence spans 345 residues: Methylthioribose-1-phosphate isomerase (345 aa).

Substrate contacts are provided by residues arginine 47–alanine 49, arginine 90, and glutamine 197. The active-site Proton donor is the aspartate 238. Residue asparagine 248–lysine 249 coordinates substrate.

Belongs to the eIF-2B alpha/beta/delta subunits family. MtnA subfamily.

The catalysed reaction is 5-(methylsulfanyl)-alpha-D-ribose 1-phosphate = 5-(methylsulfanyl)-D-ribulose 1-phosphate. It functions in the pathway amino-acid biosynthesis; L-methionine biosynthesis via salvage pathway; L-methionine from S-methyl-5-thio-alpha-D-ribose 1-phosphate: step 1/6. In terms of biological role, catalyzes the interconversion of methylthioribose-1-phosphate (MTR-1-P) into methylthioribulose-1-phosphate (MTRu-1-P). In Caldanaerobacter subterraneus subsp. tengcongensis (strain DSM 15242 / JCM 11007 / NBRC 100824 / MB4) (Thermoanaerobacter tengcongensis), this protein is Methylthioribose-1-phosphate isomerase.